An 859-amino-acid polypeptide reads, in one-letter code: Leucine--tRNA ligase (859 aa).

The 'HIGH' region motif lies at 42–52 (PYPSGKLHVGH). A 'KMSKS' region motif is present at residues 611–615 (KMSKS). Lysine 614 serves as a coordination point for ATP.

It belongs to the class-I aminoacyl-tRNA synthetase family.

It localises to the cytoplasm. It catalyses the reaction tRNA(Leu) + L-leucine + ATP = L-leucyl-tRNA(Leu) + AMP + diphosphate. The protein is Leucine--tRNA ligase of Fusobacterium nucleatum subsp. nucleatum (strain ATCC 25586 / DSM 15643 / BCRC 10681 / CIP 101130 / JCM 8532 / KCTC 2640 / LMG 13131 / VPI 4355).